The sequence spans 327 residues: Cyclin-A3-3 (327 aa).

The protein belongs to the cyclin family. Cyclin AB subfamily.

The polypeptide is Cyclin-A3-3 (CYCA3-3) (Arabidopsis thaliana (Mouse-ear cress)).